Here is a 354-residue protein sequence, read N- to C-terminus: MNGTEGPNFYIPMSNKTGVVRSPFEYPQYYLAEPWKYSILAAYMFLLILLGFPINFMTLYVTIQHKKLRTPLNYILLNLAFANHFMVLCGFTITLYTSLHGYFVFGQSGCYFEGFFATLGGEIALWSLVALAIERYIVVCKPMSNFRFGENHAMMGVAFTWIMALACAVPPLFGWSRYIPEGMQCSCGVDYYTLKPEINNESFVIYMFVVHFLIPLIIITFCYGRLVCTVKEAAAQQQESATTQKAEKEVTRMVIIMVIFFLICWVPYAYVAFYIFCNQGSEFGPIFMTVPAFFAKSSAIYNPVIYIMLNKQFRNCMITTLCCGKNPFGDDDASSAATSKTEATSVSTSQVSPA.

Residues 1 to 36 lie on the Extracellular side of the membrane; sequence MNGTEGPNFYIPMSNKTGVVRSPFEYPQYYLAEPWK. Residues Asn2 and Asn15 are each glycosylated (N-linked (GlcNAc...) asparagine). A helical transmembrane segment spans residues 37–61; sequence YSILAAYMFLLILLGFPINFMTLYV. Residues 62 to 73 are Cytoplasmic-facing; the sequence is TIQHKKLRTPLN. Residues 74 to 96 form a helical membrane-spanning segment; that stretch reads YILLNLAFANHFMVLCGFTITLY. Residues 97–110 are Extracellular-facing; that stretch reads TSLHGYFVFGQSGC. Cys110 and Cys187 are oxidised to a cystine. A helical transmembrane segment spans residues 111-133; it reads YFEGFFATLGGEIALWSLVALAI. The 'Ionic lock' involved in activated form stabilization signature appears at 134-136; the sequence is ERY. The Cytoplasmic portion of the chain corresponds to 134–152; that stretch reads ERYIVVCKPMSNFRFGENH. Residues 153–173 traverse the membrane as a helical segment; that stretch reads AMMGVAFTWIMALACAVPPLF. Residues 174 to 202 lie on the Extracellular side of the membrane; that stretch reads GWSRYIPEGMQCSCGVDYYTLKPEINNES. Residues 203–224 traverse the membrane as a helical segment; it reads FVIYMFVVHFLIPLIIITFCYG. Residues 225 to 252 are Cytoplasmic-facing; it reads RLVCTVKEAAAQQQESATTQKAEKEVTR. The chain crosses the membrane as a helical span at residues 253–274; the sequence is MVIIMVIFFLICWVPYAYVAFY. Residues 275 to 286 lie on the Extracellular side of the membrane; that stretch reads IFCNQGSEFGPI. Residues 287–308 traverse the membrane as a helical segment; it reads FMTVPAFFAKSSAIYNPVIYIM. An N6-(retinylidene)lysine modification is found at Lys296. Residues 309-354 are Cytoplasmic-facing; that stretch reads LNKQFRNCMITTLCCGKNPFGDDDASSAATSKTEATSVSTSQVSPA. 2 S-palmitoyl cysteine lipidation sites follow: Cys322 and Cys323. Positions 332-354 are disordered; sequence DASSAATSKTEATSVSTSQVSPA. The span at 334 to 354 shows a compositional bias: low complexity; sequence SSAATSKTEATSVSTSQVSPA.

It belongs to the G-protein coupled receptor 1 family. Opsin subfamily. In terms of processing, contains one covalently linked retinal chromophore. Upon light absorption, the covalently bound 11-cis-retinal is converted to all-trans-retinal. After hydrolysis of the Schiff base and release of the covalently bound all-trans-retinal, active rhodopsin is regenerated by binding of a fresh molecule of 11-cis-retinal.

The protein localises to the membrane. It is found in the cell projection. It localises to the cilium. Its subcellular location is the photoreceptor outer segment. Functionally, photoreceptor required for image-forming vision at low light intensity. Required for photoreceptor cell viability after birth. Light-induced isomerization of 11-cis to all-trans retinal triggers a conformational change that activates signaling via G-proteins. Subsequent receptor phosphorylation mediates displacement of the bound G-protein alpha subunit by arrestin and terminates signaling. The sequence is that of Rhodopsin (RHO) from Rana temporaria (European common frog).